A 1108-amino-acid chain; its full sequence is Isoleucine--tRNA ligase (1108 aa).

The 'HIGH' region signature appears at 53–63; that stretch reads PFANGLPHYGH. The short motif at 654-658 is the 'KMSKS' region element; sequence KLSKR. Lys657 is an ATP binding site.

The protein belongs to the class-I aminoacyl-tRNA synthetase family. IleS type 2 subfamily. As to quaternary structure, monomer. The cofactor is Zn(2+).

The protein localises to the cytoplasm. It catalyses the reaction tRNA(Ile) + L-isoleucine + ATP = L-isoleucyl-tRNA(Ile) + AMP + diphosphate. In terms of biological role, catalyzes the attachment of isoleucine to tRNA(Ile). As IleRS can inadvertently accommodate and process structurally similar amino acids such as valine, to avoid such errors it has two additional distinct tRNA(Ile)-dependent editing activities. One activity is designated as 'pretransfer' editing and involves the hydrolysis of activated Val-AMP. The other activity is designated 'posttransfer' editing and involves deacylation of mischarged Val-tRNA(Ile). This Rickettsia bellii (strain OSU 85-389) protein is Isoleucine--tRNA ligase.